A 351-amino-acid chain; its full sequence is Transcription factor Atoh1 (351 aa).

Disordered regions lie at residues leucine 16–leucine 39 and glutamate 89–proline 116. The span at histidine 26–proline 36 shows a compositional bias: pro residues. The region spanning glutamine 156–leucine 208 is the bHLH domain. 2 disordered regions span residues glycine 244–serine 278 and leucine 308–serine 351. Over residues alanine 247 to alanine 256 the composition is skewed to low complexity. Over residues glycine 258–proline 268 the composition is skewed to pro residues. A compositionally biased stretch (basic and acidic residues) spans histidine 332–serine 351.

Efficient DNA binding requires dimerization with another bHLH protein. As to expression, developing nervous system, and in adult epithelial cells of the gastrointestinal tract.

Its subcellular location is the nucleus. Transcriptional regulator. Activates E box-dependent transcription in collaboration with TCF3/E47, but the activity is completely antagonized by the negative regulator of neurogenesis HES1. Plays a role in the differentiation of subsets of neural cells by activating E box-dependent transcription. This chain is Transcription factor Atoh1, found in Mus musculus (Mouse).